A 426-amino-acid polypeptide reads, in one-letter code: Glutamate-1-semialdehyde 2,1-aminomutase (426 aa).

An N6-(pyridoxal phosphate)lysine modification is found at K265.

Belongs to the class-III pyridoxal-phosphate-dependent aminotransferase family. HemL subfamily. As to quaternary structure, homodimer. Requires pyridoxal 5'-phosphate as cofactor.

Its subcellular location is the cytoplasm. The catalysed reaction is (S)-4-amino-5-oxopentanoate = 5-aminolevulinate. Its pathway is porphyrin-containing compound metabolism; protoporphyrin-IX biosynthesis; 5-aminolevulinate from L-glutamyl-tRNA(Glu): step 2/2. This is Glutamate-1-semialdehyde 2,1-aminomutase from Actinobacillus pleuropneumoniae serotype 7 (strain AP76).